A 146-amino-acid chain; its full sequence is Large ribosomal subunit protein uL15 (146 aa).

The segment at 1-65 (MSDIQLNTLK…GQMPLQRRLP (65 aa)) is disordered. Residues 24-34 (RGIGSGLGKTA) are compositionally biased toward gly residues.

This sequence belongs to the universal ribosomal protein uL15 family. As to quaternary structure, part of the 50S ribosomal subunit.

Binds to the 23S rRNA. The polypeptide is Large ribosomal subunit protein uL15 (Bordetella petrii (strain ATCC BAA-461 / DSM 12804 / CCUG 43448)).